Here is a 594-residue protein sequence, read N- to C-terminus: MKANQLLKNLVLTELESAVSSYLTKQKIDLPLTEFKIRIEYSRDEKFGDYSSPFALENKNILKLNPKEIAEGVLSEIKNETLFEFVTFSPPGFINFRIRSQFLIQYTNQVMSPMVTFAKTDEKQSILLEFVSANPTGPMNIVSARSAAYGDALANLLLSLGHTVKREFYVNDYGNQVYLLGVAVLLRIFEEKGEKISFQEDESKESVFTLIEKRILPKESYRGEYIRDIAKEVLSNKTKSIQVEEWIQNKNWDECIHDLSKYAVEYNLSRQKEDLKLFGVHFDQFFSERSLHEAGDVENVPTLLKKEDVSTIDGKLHFLSTQYGDDKDRVIRREDGRPTYLMADIAYHFDKYKRGFTKLIDIWGPDHYGYIARLKGAVLSFGKSNDSFLILIAQQVNLIENKEKVKMSKRLGIFQTMRDLLSYLGKNGKDVGRYFFLMRSSDAPLDFDLDLAKDESDKNPVFYIQYAHARICSIFRELQISIADWSIPKVVSGDCFQSEERLRLLFWVARFQEEVYDTATNLEPHRLTNYLQSLSKAFTKFYSHKDNRIKEKQGEEREQLLFLILFTKRAIASGLELLGISSPEKMSKEDESNT.

A 'HIGH' region motif is present at residues 133 to 143 (ANPTGPMNIVS).

The protein belongs to the class-I aminoacyl-tRNA synthetase family. In terms of assembly, monomer.

Its subcellular location is the cytoplasm. It catalyses the reaction tRNA(Arg) + L-arginine + ATP = L-arginyl-tRNA(Arg) + AMP + diphosphate. This Leptospira biflexa serovar Patoc (strain Patoc 1 / Ames) protein is Arginine--tRNA ligase.